A 344-amino-acid chain; its full sequence is GTPase Obg (344 aa).

Residues 1-159 (MKFLDLAKVY…RTIWLRLKLI (159 aa)) form the Obg domain. The OBG-type G domain occupies 160 to 327 (ADVGLLGLPN…VLRALRARID (168 aa)). GTP is bound by residues 166 to 173 (GLPNAGKS), 191 to 195 (FTTLH), 212 to 215 (DIPG), 279 to 282 (NKID), and 308 to 310 (SGA). Mg(2+) contacts are provided by Ser-173 and Thr-193.

Belongs to the TRAFAC class OBG-HflX-like GTPase superfamily. OBG GTPase family. In terms of assembly, monomer. The cofactor is Mg(2+).

It localises to the cytoplasm. In terms of biological role, an essential GTPase which binds GTP, GDP and possibly (p)ppGpp with moderate affinity, with high nucleotide exchange rates and a fairly low GTP hydrolysis rate. Plays a role in control of the cell cycle, stress response, ribosome biogenesis and in those bacteria that undergo differentiation, in morphogenesis control. In Ruegeria pomeroyi (strain ATCC 700808 / DSM 15171 / DSS-3) (Silicibacter pomeroyi), this protein is GTPase Obg.